Consider the following 759-residue polypeptide: Arylphorin subunit C223 (759 aa).

A signal peptide spans 1-15; the sequence is MKIAIVLLAIVGLAA.

This sequence belongs to the hemocyanin family. Heterohexamer. As to expression, fat body.

It localises to the secreted. Its subcellular location is the extracellular space. Arylphorin is a larval storage protein (LSP) which may serve as a storage protein used primarily as a source of aromatic amino acids for protein synthesis during metamorphosis. It is a constituent of the sclerotizing system of the cuticle, and serves as a carrier for ecdysteroid hormone. This chain is Arylphorin subunit C223, found in Calliphora vicina (Blue blowfly).